The following is a 567-amino-acid chain: Sporulation-specific protein 5 (567 aa).

The segment covering 1 to 18 has biased composition (polar residues); that stretch reads MNGIITPQKQKQLMSSPS. Disordered regions lie at residues 1–39 and 52–76; these read MNGI…VDVN and ILLT…KKPN. The segment covering 21–35 has biased composition (low complexity); that stretch reads PLSTTELSTPTSQTT. Residues 56–66 are compositionally biased toward polar residues; that stretch reads PGTSPNATPGS. 2 RRM domains span residues 296 to 380 and 384 to 462; these read RNVY…SLQD and TNLY…FADS.

It localises to the cytoplasm. In terms of biological role, RNA-binding protein which plays a role in sporulation. Regulates the progression of meiosis I and may function in the vicinity of the Mei2 dot. The sequence is that of Sporulation-specific protein 5 (spo5) from Schizosaccharomyces pombe (strain 972 / ATCC 24843) (Fission yeast).